The chain runs to 856 residues: V-type proton ATPase 116 kDa subunit a 2 (856 aa).

The Cytoplasmic portion of the chain corresponds to 1 to 393 (MGSLFRSETM…DAYGVGSYRE (393 aa)). Residues 394–412 (VNPALFTIITFPFLFAVMF) traverse the membrane as a helical segment. Topologically, residues 413-414 (GD) are vacuolar. Residues 415 to 431 (FGHGFVMFLFALLLVLN) form a helical membrane-spanning segment. The Cytoplasmic segment spans residues 432-445 (ENHPRLNQSQEIMR). Residues 446–475 (MFFNGRYILLLMGLFSVYTGLIYNDCFSKS) traverse the membrane as a helical segment. At 476–549 (VNLFGSGWNV…ATNRLTFLNS (74 aa)) the chain is on the vacuolar side. N-linked (GlcNAc...) asparagine glycans are attached at residues asparagine 484 and asparagine 505. The chain crosses the membrane as a helical span at residues 550-569 (FKMKMSVILGIIHMTFGVIL). Topologically, residues 570–587 (GIFNHLHFRKKFNIYLVS) are cytoplasmic. The helical transmembrane segment at 588–608 (IPELLFMLCIFGYLIFMIFYK) threads the bilayer. Over 609–651 (WLVFSAETSRVAPSILIEFINMFLFPASKTSGLYTGQEYVQRV) the chain is Vacuolar. The helical transmembrane segment at 652 to 671 (LLVVTALSVPVLFLGKPLFL) threads the bilayer. The Cytoplasmic segment spans residues 672-739 (LWLHNGRSCF…EILMTQVIHS (68 aa)). Phosphoserine is present on residues serine 695 and serine 700. The chain crosses the membrane as a helical span at residues 740 to 764 (IEYCLGCISNTASYLRLWALSLAHA). Over 765-785 (QLSDVLWAMLMRVGLRVDTTY) the chain is Vacuolar. A helical membrane pass occupies residues 786–824 (GVLLLLPVIALFAVLTIFILLIMEGLSAFLHAIRLHWVE). Over 825 to 856 (FQNKFYVGAGTKFVPFSFSLLSSKFNNDDSVA) the chain is Cytoplasmic.

Belongs to the V-ATPase 116 kDa subunit family. In terms of assembly, V-ATPase is a heteromultimeric enzyme made up of two complexes: the ATP-hydrolytic V1 complex and the proton translocation V0 complex. The V1 complex consists of three catalytic AB heterodimers that form a heterohexamer, three peripheral stalks each consisting of EG heterodimers, one central rotor including subunits D and F, and the regulatory subunits C and H. The proton translocation complex V0 consists of the proton transport subunit a, a ring of proteolipid subunits c9c'', rotary subunit d, subunits e and f, and the accessory subunits ATP6AP1/Ac45 and ATP6AP2/PRR. Directly interacts with PSCD2 through its N-terminal cytosolic tail in an intra-endosomal acidification-dependent manner. Disruption of this interaction results in the inhibition of endocytosis. Interacts with SPAAR.

It localises to the cell membrane. Its subcellular location is the endosome membrane. Its function is as follows. Subunit of the V0 complex of vacuolar(H+)-ATPase (V-ATPase), a multisubunit enzyme composed of a peripheral complex (V1) that hydrolyzes ATP and a membrane integral complex (V0) that translocates protons. V-ATPase is responsible for acidifying and maintaining the pH of intracellular compartments and in some cell types, is targeted to the plasma membrane, where it is responsible for acidifying the extracellular environment. Essential component of the endosomal pH-sensing machinery. May play a role in maintaining the Golgi functions, such as glycosylation maturation, by controlling the Golgi pH. In aerobic conditions, involved in intracellular iron homeostasis, thus triggering the activity of Fe(2+) prolyl hydroxylase (PHD) enzymes, and leading to HIF1A hydroxylation and subsequent proteasomal degradation. This is V-type proton ATPase 116 kDa subunit a 2 (ATP6V0A2) from Homo sapiens (Human).